The sequence spans 559 residues: Probable D-2-hydroxyglutarate dehydrogenase, mitochondrial (559 aa).

The transit peptide at M1–F80 directs the protein to the mitochondrion. The 180-residue stretch at Y131–K310 folds into the FAD-binding PCMH-type domain.

It belongs to the FAD-binding oxidoreductase/transferase type 4 family. As to quaternary structure, homodimer. FAD serves as cofactor.

It localises to the mitochondrion. It catalyses the reaction (R)-2-hydroxyglutarate + A = 2-oxoglutarate + AH2. In terms of biological role, catalyzes the oxidation of D-2-hydroxyglutarate to alpha-ketoglutarate. The protein is Probable D-2-hydroxyglutarate dehydrogenase, mitochondrial (D2HGDH) of Oryza sativa subsp. japonica (Rice).